A 301-amino-acid chain; its full sequence is Probable 5-dehydro-4-deoxyglucarate dehydratase (301 aa).

Belongs to the DapA family.

The enzyme catalyses 5-dehydro-4-deoxy-D-glucarate + H(+) = 2,5-dioxopentanoate + CO2 + H2O. Its pathway is carbohydrate acid metabolism; D-glucarate degradation; 2,5-dioxopentanoate from D-glucarate: step 2/2. The sequence is that of Probable 5-dehydro-4-deoxyglucarate dehydratase from Chelativorans sp. (strain BNC1).